The following is a 648-amino-acid chain: Threonine--tRNA ligase (648 aa).

The 62-residue stretch at 1–62 (MVEIILPDGS…PHGAQVAIIT (62 aa)) folds into the TGS domain. A catalytic region spans residues 243–536 (DHRRIGKDLD…LVEHYAGWFP (294 aa)). The Zn(2+) site is built by Cys-336, His-387, and His-513.

Belongs to the class-II aminoacyl-tRNA synthetase family. Homodimer. Requires Zn(2+) as cofactor.

The protein resides in the cytoplasm. The catalysed reaction is tRNA(Thr) + L-threonine + ATP = L-threonyl-tRNA(Thr) + AMP + diphosphate + H(+). Catalyzes the attachment of threonine to tRNA(Thr) in a two-step reaction: L-threonine is first activated by ATP to form Thr-AMP and then transferred to the acceptor end of tRNA(Thr). Also edits incorrectly charged L-seryl-tRNA(Thr). This Magnetococcus marinus (strain ATCC BAA-1437 / JCM 17883 / MC-1) protein is Threonine--tRNA ligase.